Consider the following 173-residue polypeptide: HAM34 protein (173 aa).

The segment covering 22-89 (AAPATTPDTA…ADGTQTATAP (68 aa)) has biased composition (low complexity). Positions 22-155 (AAPATTPDTA…ATDTTSGASH (134 aa)) are disordered. Residues 95-133 (TEESSASGEMTPTVGTDTSDQVSDSTAAGPSTPEGSMTG) show a composition bias toward polar residues. Over residues 134 to 155 (TSTPKASDSSSSATDTTSGASH) the composition is skewed to low complexity.

Germinating spores.

In terms of biological role, could be a structural protein required for the infection process of B.lactucae. The protein is HAM34 protein (HAM34) of Bremia lactucae (Lettuce downy mildew).